A 217-amino-acid chain; its full sequence is Large ribosomal subunit protein uL3 (217 aa).

This sequence belongs to the universal ribosomal protein uL3 family. As to quaternary structure, part of the 50S ribosomal subunit. Forms a cluster with proteins L14 and L19.

In terms of biological role, one of the primary rRNA binding proteins, it binds directly near the 3'-end of the 23S rRNA, where it nucleates assembly of the 50S subunit. The protein is Large ribosomal subunit protein uL3 of Mycobacterium ulcerans (strain Agy99).